The following is a 912-amino-acid chain: Protein translocase subunit SecA (912 aa).

Residues Gln-87, 105–109 (GEGKT), and Asp-509 contribute to the ATP site. Basic and acidic residues predominate over residues 847-859 (RERAVSQPVHEDA). The interval 847 to 912 (RERAVSQPVH…KYKHCHGKLN (66 aa)) is disordered. Positions 867 to 878 (AESEEASGESAD) are enriched in acidic residues. A compositionally biased stretch (basic and acidic residues) spans 881 to 892 (QPVRRDGPKVGR). 4 residues coordinate Zn(2+): Cys-896, Cys-898, Cys-907, and His-908. Basic residues predominate over residues 902–912 (KKYKHCHGKLN).

The protein belongs to the SecA family. Monomer and homodimer. Part of the essential Sec protein translocation apparatus which comprises SecA, SecYEG and auxiliary proteins SecDF-YajC and YidC. Zn(2+) is required as a cofactor.

It is found in the cell inner membrane. It localises to the cytoplasm. The catalysed reaction is ATP + H2O + cellular proteinSide 1 = ADP + phosphate + cellular proteinSide 2.. Part of the Sec protein translocase complex. Interacts with the SecYEG preprotein conducting channel. Has a central role in coupling the hydrolysis of ATP to the transfer of proteins into and across the cell membrane, serving both as a receptor for the preprotein-SecB complex and as an ATP-driven molecular motor driving the stepwise translocation of polypeptide chains across the membrane. The polypeptide is Protein translocase subunit SecA (Chromohalobacter salexigens (strain ATCC BAA-138 / DSM 3043 / CIP 106854 / NCIMB 13768 / 1H11)).